The sequence spans 143 residues: MSLEQVVYTAHAKATGGRDGRATSSDNILDVQLTVPKEMGGMGGGTNPEQLFAAGYSACFLGAMKFVATRDKFNIPKDAYVEGDVGIGPIPNGFGIEVKLHVHLPGMDTDEAKKLVDAAHIVCPYSNATRNNIDVDFEIVTDA.

The protein belongs to the OsmC/Ohr family.

This is an uncharacterized protein from Acinetobacter baylyi (strain ATCC 33305 / BD413 / ADP1).